Reading from the N-terminus, the 320-residue chain is ATP-dependent 6-phosphofructokinase (320 aa).

An ATP-binding site is contributed by Gly-12. An ADP-binding site is contributed by 22 to 26 (RSVIR). ATP-binding positions include 73–74 (RF) and 103–106 (GDGS). Residue Asp-104 coordinates Mg(2+). 126–128 (TID) contributes to the substrate binding site. Catalysis depends on Asp-128, which acts as the Proton acceptor. Arg-155 serves as a coordination point for ADP. Substrate-binding positions include Arg-163 and 170 to 172 (MGR). ADP-binding positions include 186–188 (GAE) and 214–216 (KRH). Residues Glu-223, Arg-244, and 250–253 (HIQR) each bind substrate.

Belongs to the phosphofructokinase type A (PFKA) family. ATP-dependent PFK group I subfamily. Prokaryotic clade 'B1' sub-subfamily. In terms of assembly, homotetramer. The cofactor is Mg(2+).

The protein localises to the cytoplasm. It carries out the reaction beta-D-fructose 6-phosphate + ATP = beta-D-fructose 1,6-bisphosphate + ADP + H(+). It participates in carbohydrate degradation; glycolysis; D-glyceraldehyde 3-phosphate and glycerone phosphate from D-glucose: step 3/4. Its activity is regulated as follows. Allosterically activated by ADP and other diphosphonucleosides, and allosterically inhibited by phosphoenolpyruvate. Functionally, catalyzes the phosphorylation of D-fructose 6-phosphate to fructose 1,6-bisphosphate by ATP, the first committing step of glycolysis. This is ATP-dependent 6-phosphofructokinase from Tolumonas auensis (strain DSM 9187 / NBRC 110442 / TA 4).